The sequence spans 79 residues: Small ribosomal subunit protein bS18 (79 aa).

This sequence belongs to the bacterial ribosomal protein bS18 family. Part of the 30S ribosomal subunit. Forms a tight heterodimer with protein bS6.

Its function is as follows. Binds as a heterodimer with protein bS6 to the central domain of the 16S rRNA, where it helps stabilize the platform of the 30S subunit. This Streptococcus pyogenes serotype M49 (strain NZ131) protein is Small ribosomal subunit protein bS18.